A 179-amino-acid polypeptide reads, in one-letter code: Stathmin-2 (179 aa).

Positions 1 to 26 (MAKTAMAYKEKMKELSMLSLICSCFY) are membrane attachment. Serine 16 is modified (phosphoserine). S-palmitoyl cysteine attachment occurs at residues cysteine 22 and cysteine 24. One can recognise an SLD domain in the interval 38–179 (DDMEVKQINK…NKELQVELSG (142 aa)). The tract at residues 39-96 (DMEVKQINKRASGQAFELILKPPSPISEAPRTLASPKKKDLSLEEIQKKLEAAEGRRK) is regulatory/phosphorylation domain. Phosphoserine is present on serine 50. Phosphoserine; by MAPK8 occurs at positions 62 and 73. Residues 75–179 (KKKDLSLEEI…NKELQVELSG (105 aa)) are a coiled coil. 2 positions are modified to phosphoserine: serine 80 and serine 97.

The protein belongs to the stathmin family. Interacts with ITM2C. Interacts with MAPK8. Interacts with KIFBP. Interacts (via the N-terminal region) with CIB1 (via C-terminal region); the interaction is direct, occurs in a calcium-dependent manner and attenuates the neurite outgrowth inhibition of STMN2. In terms of processing, sumoylated. Phosphorylated by MAPK9 and MAPK10 in the developing brain cortex. Phosphorylated mostly by MAPK8. Post-translationally, N-terminal palmitoylation promotes specific anchoring to the cytosolic leaflet of Golgi membranes and subsequent vesicular trafficking along dendrites and axons. Neuronal Stathmins are substrates for palmitoyltransferases ZDHHC3, ZDHHC7 and ZDHHC15. In terms of tissue distribution, expressed in neurons (at protein level). Present in growth cones and abundant in developing neurons.

Its subcellular location is the cytoplasm. It localises to the perinuclear region. The protein localises to the cell projection. The protein resides in the growth cone. It is found in the axon. Its subcellular location is the membrane. It localises to the golgi apparatus. The protein localises to the endosome. The protein resides in the lamellipodium. Its function is as follows. Regulator of microtubule stability. When phosphorylated by MAPK8, stabilizes microtubules and consequently controls neurite length in cortical neurons. In the developing brain, negatively regulates the rate of exit from multipolar stage and retards radial migration from the ventricular zone. In Rattus norvegicus (Rat), this protein is Stathmin-2 (Stmn2).